An 83-amino-acid polypeptide reads, in one-letter code: uncharacterized protein (83 aa).

A helical transmembrane segment spans residues 50–70 (IMVFLGEAWIILIPFAIFCII).

This sequence belongs to the plectrovirus ORF7 family.

It localises to the host membrane. This is an uncharacterized protein from Spiroplasma citri (SpV1).